Consider the following 295-residue polypeptide: Origin of replication complex subunit 6 (295 aa).

A disordered region spans residues 212–295 (PSKRKHDDDS…MALEVSSAAN (84 aa)). Over residues 220–236 (DSDSSGESSGDDQDELD) the composition is skewed to acidic residues. Positions 254–263 (WKSSVLSNKQ) are enriched in polar residues.

This sequence belongs to the ORC6 family. Component of the origin recognition complex (ORC) composed of at least ORC1, ORC2, ORC3, ORC4, ORC5 and ORC6. ORC is regulated in a cell-cycle and development dependent manner. It is sequentially assembled at the exit from anaphase of mitosis and disassembled as cells enter S phase.

The protein localises to the nucleus. Its function is as follows. Component of the origin recognition complex (ORC) that binds origins of replication. DNA-binding is ATP-dependent. The specific DNA sequences that define origins of replication have not been identified yet. ORC is required to assemble the pre-replication complex necessary to initiate DNA replication. The sequence is that of Origin of replication complex subunit 6 from Oryza sativa subsp. japonica (Rice).